The sequence spans 118 residues: T cell receptor gamma variable 5 (118 aa).

The N-terminal stretch at methionine 1–glutamine 17 is a signal peptide. The Ig-like domain maps to lysine 18–arginine 118. An intrachain disulfide couples cysteine 41 to cysteine 113. N-linked (GlcNAc...) asparagine glycosylation is present at asparagine 106.

Gamma-delta TR is a heterodimer composed of a gamma and delta chain; disulfide-linked. The gamma-delta TR is associated with the transmembrane signaling CD3 coreceptor proteins following the stoichiometry: a single gamma-delta TR heterodimer associates with one CD3D-CD3E heterodimer, one CD3G-CD3E heterodimer and one CD247 homodimer forming a stable octameric structure. Upon activation, gamma-delta TR complex associates with FCER1G to initiate intracellular signaling.

The protein resides in the cell membrane. Its function is as follows. V region of the variable domain of T cell receptor (TR) gamma chain that participates in the antigen recognition. Gamma-delta TRs recognize a variety of self and foreign non-peptide antigens frequently expressed at the epithelial boundaries between the host and external environment, including endogenous lipids presented by MH-like protein CD1D and phosphoantigens presented by butyrophilin-like molecule BTN3A1. Upon antigen recognition induces rapid, innate-like immune responses involved in pathogen clearance and tissue repair. Binding of gamma-delta TR complex to antigen triggers phosphorylation of immunoreceptor tyrosine-based activation motifs (ITAMs) in the CD3 chains by the LCK and FYN kinases, allowing the recruitment, phosphorylation, and activation of ZAP70 that facilitates phosphorylation of the scaffolding proteins LCP2 and LAT. This lead to the formation of a supramolecular signalosome that recruits the phospholipase PLCG1, resulting in calcium mobilization and ERK activation, ultimately leading to T cell expansion and differentiation into effector cells. Gamma-delta TRs are produced through somatic rearrangement of a limited repertoire of variable (V), diversity (D), and joining (J) genes. The potential diversity of gamma-delta TRs is conferred by the unique ability to rearrange (D) genes in tandem and to utilize all three reading frames. The combinatorial diversity is considerably increased by the sequence exonuclease trimming and random nucleotide (N) region additions which occur during the V-(D)-J rearrangements. This is T cell receptor gamma variable 5 from Homo sapiens (Human).